The primary structure comprises 1127 residues: Inactive phospholipase C-like protein 2 (1127 aa).

Residues M1–G11 are compositionally biased toward gly residues. Residues M1 to P128 form a disordered region. A2 carries the post-translational modification N-acetylalanine. Residue S17 is modified to Phosphoserine. Residues G19–G31 are compositionally biased toward low complexity. Residues V32–L42 are compositionally biased toward gly residues. T84 carries the phosphothreonine modification. Positions N141–S251 constitute a PH domain. A PI-PLC X-box domain is found at Q426–K570. T584 carries the post-translational modification Phosphothreonine. In terms of domain architecture, PI-PLC Y-box spans L618 to R734. The C2 domain occupies R734–S863. The disordered stretch occupies residues G1101–E1127. Residues D1106 to E1127 are compositionally biased toward basic and acidic residues. S1113 is modified (phosphoserine).

It localises to the cytoplasm. Functionally, may play an role in the regulation of Ins(1,4,5)P3 around the endoplasmic reticulum. The sequence is that of Inactive phospholipase C-like protein 2 (PLCL2) from Homo sapiens (Human).